The sequence spans 293 residues: Signal recognition particle receptor FtsY (293 aa).

GTP contacts are provided by residues 93 to 100 (GVNGAGKT), 175 to 179 (DTAGR), and 239 to 242 (TKLD).

Belongs to the GTP-binding SRP family. FtsY subfamily. As to quaternary structure, part of the signal recognition particle protein translocation system, which is composed of SRP and FtsY. SRP is a ribonucleoprotein composed of Ffh and a 4.5S RNA molecule.

It is found in the cell inner membrane. The protein localises to the cytoplasm. It carries out the reaction GTP + H2O = GDP + phosphate + H(+). Its function is as follows. Involved in targeting and insertion of nascent membrane proteins into the cytoplasmic membrane. Acts as a receptor for the complex formed by the signal recognition particle (SRP) and the ribosome-nascent chain (RNC). Interaction with SRP-RNC leads to the transfer of the RNC complex to the Sec translocase for insertion into the membrane, the hydrolysis of GTP by both Ffh and FtsY, and the dissociation of the SRP-FtsY complex into the individual components. The protein is Signal recognition particle receptor FtsY of Helicobacter pylori (strain ATCC 700392 / 26695) (Campylobacter pylori).